The chain runs to 366 residues: NAD(P)H-quinone oxidoreductase subunit 1, chloroplastic (366 aa).

7 helical membrane-spanning segments follow: residues 28 to 48, 105 to 125, 128 to 148, 250 to 270, 271 to 291, 303 to 323, and 346 to 366; these read IWLL…VLVI, IAVI…HLVL, LSIG…GLLM, SGIK…VSSL, FVTV…FIFI, IFGM…FLFI, and FLLP…LLSL.

It belongs to the complex I subunit 1 family. As to quaternary structure, NDH is composed of at least 16 different subunits, 5 of which are encoded in the nucleus.

The protein resides in the plastid. It localises to the chloroplast thylakoid membrane. The catalysed reaction is a plastoquinone + NADH + (n+1) H(+)(in) = a plastoquinol + NAD(+) + n H(+)(out). It catalyses the reaction a plastoquinone + NADPH + (n+1) H(+)(in) = a plastoquinol + NADP(+) + n H(+)(out). NDH shuttles electrons from NAD(P)H:plastoquinone, via FMN and iron-sulfur (Fe-S) centers, to quinones in the photosynthetic chain and possibly in a chloroplast respiratory chain. The immediate electron acceptor for the enzyme in this species is believed to be plastoquinone. Couples the redox reaction to proton translocation, and thus conserves the redox energy in a proton gradient. The protein is NAD(P)H-quinone oxidoreductase subunit 1, chloroplastic of Nandina domestica (Heavenly bamboo).